The following is a 130-amino-acid chain: Small ribosomal subunit protein uS11 (130 aa).

The protein belongs to the universal ribosomal protein uS11 family. As to quaternary structure, part of the 30S ribosomal subunit. Interacts with proteins S7 and S18. Binds to IF-3.

Located on the platform of the 30S subunit, it bridges several disparate RNA helices of the 16S rRNA. Forms part of the Shine-Dalgarno cleft in the 70S ribosome. In Xanthomonas campestris pv. campestris (strain B100), this protein is Small ribosomal subunit protein uS11.